The primary structure comprises 262 residues: Type II restriction enzyme MspI (262 aa).

The catalysed reaction is Endonucleolytic cleavage of DNA to give specific double-stranded fragments with terminal 5'-phosphates.. A P subtype restriction enzyme that recognizes the double-stranded sequence 5'-CCGG-3' and cleaves after C-1. The polypeptide is Type II restriction enzyme MspI (mspIR) (Moraxella sp).